A 446-amino-acid polypeptide reads, in one-letter code: NAD kinase (446 aa).

5 positions are modified to phosphoserine: serine 46, serine 48, serine 50, serine 55, and serine 64.

The protein belongs to the NAD kinase family. A divalent metal cation serves as cofactor. In terms of tissue distribution, widely expressed but not detected in skeletal muscle.

It carries out the reaction NAD(+) + ATP = ADP + NADP(+) + H(+). This chain is NAD kinase (NADK), found in Homo sapiens (Human).